We begin with the raw amino-acid sequence, 1214 residues long: Protein charlatan (1214 aa).

Disordered stretches follow at residues 1-20 (MATL…QSSN), 213-238 (HVNQ…RQEH), and 250-284 (SANA…GGRK). Positions 258 to 276 (AQSTPTSAPSNSSGGSTSS) are enriched in low complexity. C2H2-type zinc fingers lie at residues 305 to 327 (YACT…ENIH) and 333 to 356 (FQCY…LRMH). Disordered stretches follow at residues 367–397 (RRHV…NVTI) and 463–488 (PVAS…SGLL). Positions 473-485 (GSHGGNGNGGSGS) are enriched in gly residues. 2 consecutive C2H2-type zinc fingers follow at residues 496-518 (FTCC…LNTH) and 522-545 (FVCL…LKVH). Disordered regions lie at residues 741 to 790 (SASS…ATSP), 848 to 946 (NDED…SGPS), and 1062 to 1084 (LSTP…SNAS). Low complexity-rich tracts occupy residues 855-871 (QQHQ…QQQQ), 885-896 (NNNNNNNSNNNN), 923-946 (SPGT…SGPS), and 1071-1084 (KAAP…SNAS).

As to expression, expressed in the PNS and CNS. In early blastoderm stages, it is ubiquitously expressed, then, before stage 5, it disappears from the poles of the embryo and faint stripes are visible. At stage 5, it also accumulates in the dorsal region, cephalic furrow ectodermal patches between the tracheal pits, where neurons of the PNS appear. In older embryos (stage 15) a strong expression is mostly restricted to the central nervous system (CNS) and PNS. In PNS, the pattern suggests that expression occur in many of the neurons of the ventral, lateral and dorsal clusters of neurons. In third instar wing disks, it is expressed in rows of cells on either side of the prospective anterior wing margin and in groups of cells that coincide with proneural clusters of ac/sc expression. Also expressed independently of ac/sc in certain areas of the disk, such as the postnotum and posterior dorsal proximal wing. Expressed in the proneural clusters of the leg disks and in the eye/antenna disk.

Its subcellular location is the nucleus. In terms of biological role, probable transcription factor involved in the development of the adult pattern of macrochaetae. Required for accumulation of achaete (ac) and scute (sc) in proneural clusters. Probably acts by binding to the proneural cluster-specific enhancers of the ac/sc complex and increasing enhancer efficiency, thereby acting as a stimulator of ac/sc expression in proneural clusters. Also required for correct development of the embryonic/larval peripheral nervous system (PNS). The protein is Protein charlatan (chn) of Drosophila melanogaster (Fruit fly).